A 328-amino-acid chain; its full sequence is Fructokinase-2 (328 aa).

It belongs to the carbohydrate kinase PfkB family.

It catalyses the reaction D-fructose + ATP = D-fructose 6-phosphate + ADP + H(+). The protein operates within glycan biosynthesis; starch biosynthesis. In terms of biological role, may play an important role in maintaining the flux of carbon towards starch formation. The polypeptide is Fructokinase-2 (FRK2) (Solanum lycopersicum (Tomato)).